Reading from the N-terminus, the 304-residue chain is Negative regulator of the PHO system (304 aa).

In terms of domain architecture, Protein kinase spans 7-297 (FKQLEKVGNG…AKDALNHPWF (291 aa)). ATP contacts are provided by residues 13–21 (VGNGTYATV) and lysine 36. Residue aspartate 133 is the Proton acceptor of the active site.

Belongs to the protein kinase superfamily. CMGC Ser/Thr protein kinase family. CDC2/CDKX subfamily. As to quaternary structure, interacts with a number of cyclins.

The catalysed reaction is L-seryl-[protein] + ATP = O-phospho-L-seryl-[protein] + ADP + H(+). The enzyme catalyses L-threonyl-[protein] + ATP = O-phospho-L-threonyl-[protein] + ADP + H(+). In terms of biological role, when phosphate concentrations are high it phosphorylates the PHO4 transcription factor thus establishing repression. The polypeptide is Negative regulator of the PHO system (PHO85) (Kluyveromyces lactis (strain ATCC 8585 / CBS 2359 / DSM 70799 / NBRC 1267 / NRRL Y-1140 / WM37) (Yeast)).